Reading from the N-terminus, the 63-residue chain is Large ribosomal subunit protein bL28 (63 aa).

The protein belongs to the bacterial ribosomal protein bL28 family.

This Coprothermobacter proteolyticus (strain ATCC 35245 / DSM 5265 / OCM 4 / BT) protein is Large ribosomal subunit protein bL28.